We begin with the raw amino-acid sequence, 331 residues long: Glyceraldehyde-3-phosphate dehydrogenase (331 aa).

NAD(+) is bound by residues 12 to 13 (RI), D34, R78, and T120. Residues 149–151 (SCT), T180, 209–210 (TG), and R232 contribute to the D-glyceraldehyde 3-phosphate site. The active-site Nucleophile is the C150. N314 lines the NAD(+) pocket.

It belongs to the glyceraldehyde-3-phosphate dehydrogenase family. Homotetramer.

It is found in the cytoplasm. The catalysed reaction is D-glyceraldehyde 3-phosphate + phosphate + NAD(+) = (2R)-3-phospho-glyceroyl phosphate + NADH + H(+). It participates in carbohydrate degradation; glycolysis; pyruvate from D-glyceraldehyde 3-phosphate: step 1/5. In terms of biological role, catalyzes the oxidative phosphorylation of glyceraldehyde 3-phosphate (G3P) to 1,3-bisphosphoglycerate (BPG) using the cofactor NAD. The first reaction step involves the formation of a hemiacetal intermediate between G3P and a cysteine residue, and this hemiacetal intermediate is then oxidized to a thioester, with concomitant reduction of NAD to NADH. The reduced NADH is then exchanged with the second NAD, and the thioester is attacked by a nucleophilic inorganic phosphate to produce BPG. The protein is Glyceraldehyde-3-phosphate dehydrogenase (gapA) of Salmonella typhi.